A 337-amino-acid polypeptide reads, in one-letter code: Cytoskeleton protein RodZ (337 aa).

Topologically, residues 1 to 111 (MNTEATHDQN…LGKRRKKRDG (111 aa)) are cytoplasmic. Positions 19 to 71 (LRNAREQLGLSQQAVAERLCLKVSTVRDIEEDKAPADLASTFLRGYIRSYARL) constitute an HTH cro/C1-type domain. Residues 30–49 (QQAVAERLCLKVSTVRDIEE) constitute a DNA-binding region (H-T-H motif). Residues 112–132 (WLMTFTWLVLFVVIGLSGAWW) traverse the membrane as a helical; Signal-anchor for type II membrane protein segment. Over 133-337 (WQDHKAQQEE…TLNAEQSPAQ (205 aa)) the chain is Periplasmic. Residues 145-167 (TMADQSSAELSSNSEQGQSVPLN) show a composition bias toward polar residues. The tract at residues 145–237 (TMADQSSAEL…ATTTPDGAAP (93 aa)) is disordered. Residues 168–207 (TSTTTDPATTSTPPASVDTTATNTQTPAVTAPAPAVDPQQ) show a composition bias toward low complexity. The span at 208-218 (NAVVSPSQANV) shows a compositional bias: polar residues. The segment covering 219–237 (DTAATPAPTATTTPDGAAP) has biased composition (low complexity).

This sequence belongs to the RodZ family.

Its subcellular location is the cell inner membrane. Its function is as follows. Cytoskeletal protein that is involved in cell-shape control through regulation of the length of the long axis. This chain is Cytoskeleton protein RodZ, found in Escherichia coli (strain 55989 / EAEC).